Here is a 20-residue protein sequence, read N- to C-terminus: Fibrinogen (20 aa).

Positions 1-20 (LHSNLEYQYRYSGRVASGIP) constitute a Vitellogenin domain.

As to expression, secreted into the hemolymph.

It localises to the secreted. Its subcellular location is the extracellular space. In terms of biological role, involved in lipid transport. Plays a role in hemolymph clotting. May be involved in wound healing in the cuticle. The sequence is that of Fibrinogen from Pacifastacus leniusculus (Signal crayfish).